Here is a 287-residue protein sequence, read N- to C-terminus: X-box-binding protein 1 (287 aa).

Positions 61–117 (EEKMDRRKLKNRVAAQNARDKKKERSAKIEDVMRDLVEENRRLRAENERLRRQNKNL) constitute a bZIP domain. Residues 63-87 (KMDRRKLKNRVAAQNARDKKKERSA) form a disordered region. A basic motif region spans residues 63 to 88 (KMDRRKLKNRVAAQNARDKKKERSAK). A compositionally biased stretch (basic and acidic residues) spans 78–87 (ARDKKKERSA). A leucine-zipper region spans residues 89 to 117 (IEDVMRDLVEENRRLRAENERLRRQNKNL).

Interacts with SUMO-conjugating enzyme ubc-9; the interaction is direct. Post-translationally, sumoylated. Sumoylation may negatively modulate the transcription of genes involved in the ER-stress-response.

Its subcellular location is the nucleus. Required for transcriptional regulation of the unfolded protein response (UPR) in the endoplasmic reticulum (ER) under stressed conditions, acting downstream of ire-1, and also maintaining ER homeostasis via a negative feedback loop, in parallel with ER kinase pek-1. May also regulate Golgi protein trafficking distal to the ER. Protects the host organism from the detrimental effects of mounting an innate immune response to microbes, such as the Gram-negative bacterium P.aeruginosa, probably by modulating the UPR. Functionally, plays a role in the unconventional cytoplasmic splicing processing of its own mRNA triggered by the endoplasmic reticulum (ER) transmembrane endoribonuclease ire-1: upon ER stress, the emerging xbp-1 polypeptide chain, as part of a mRNA-ribosome-nascent chain (R-RNC) complex, cotranslationally recruits its own unprocessed mRNA through transient docking to the ER membrane and translational pausing, therefore facilitating efficient ire-1-mediated xbp-1 mRNA isoform 2 production. In terms of biological role, functions as a stress-inducible potent transcriptional activator during endoplasmic reticulum (ER) stress by inducing unfolded protein response (UPR) target genes via binding to the UPR element (UPRE). Plays a role in modulation of the UPR, lipid metabolism, proteostasis, and lifespan. In neurons, rescues stress resistance, increases longevity, and, drives expression of lysosomal genes in the intestine and activates the UPR in distal, non-neuronal cell types through a cell-nonautonomous mechanism. In neurons or intestine, plays a role in protection against proteotoxicity, acting via positive modulation of genes involved in lysosomal function, including lipases and the fatty-acid desaturase fat-6. Protection against proteotoxicity in neurons is dependent upon the transcription factor atf-6. The polypeptide is X-box-binding protein 1 (Caenorhabditis elegans).